The chain runs to 78 residues: Putative defensin-like protein 133 (78 aa).

A signal peptide spans 1 to 24 (MKRSFLLLLTILTIFIILGQGVMG). Intrachain disulfides connect C34–C75, C44–C68, C49–C72, and C53–C74.

The protein belongs to the DEFL family.

It is found in the secreted. The sequence is that of Putative defensin-like protein 133 (LCR33) from Arabidopsis thaliana (Mouse-ear cress).